A 743-amino-acid polypeptide reads, in one-letter code: Pentatricopeptide repeat-containing protein At2g16880 (743 aa).

16 PPR repeats span residues 130–164 (SKAL…KLKP), 165–202 (NLLT…GVSL), 203–233 (NVQT…MVSE), 239–273 (DNVT…GLVP), 274–308 (NRVT…NVLP), 309–343 (DLCT…KLQP), 344–378 (DVVT…GVKA), 379–414 (NQVT…GFSP), 415–449 (DIVT…GIKM), 450–484 (NTIT…GFIV), 485–519 (DEVT…KITP), 520–554 (TVST…GLLP), 555–589 (DDST…SFKP), 590–620 (DNYT…LIEE), 624–658 (DTVT…GLEP), and 659–689 (DRFT…FSGK).

The protein belongs to the PPR family. P subfamily.

This chain is Pentatricopeptide repeat-containing protein At2g16880, found in Arabidopsis thaliana (Mouse-ear cress).